The following is a 361-amino-acid chain: MNQVFNFSSGPAMLPAEVLRKAEQELCNWHGLGTSVMEISHRSKEFLEVAQSSEQDLRELLAVPDNYKVLFCQGGARAQFAAVPMNLLGEATRADYIDGGYWAHSAIKEAQKYCDPQVINVTTEIDSMRAIKPMRDWELSSGGAYLHYCPNETIDGLAIDELPDFGDRVVVADFSSTILSHPLDVSRFGVIYAGAQKNIGPAGLTLVIVREDLLGRASKALPSILDYSVLAENDSMFNTPPTFAWYLSGLVFKWLKAQGGLAEMDKRNQAKASLLYRTIDESYFYRNTVASANRSRMNVPFQLADSKLDALFLQESFAAGLHALKGHRVVGGMRASLYNAVPLEGVQALVDFMLDFARRHG.

L-glutamate-binding residues include serine 9 and arginine 42. Residues 76 to 77 (AR), tryptophan 102, threonine 153, aspartate 173, and glutamine 196 each bind pyridoxal 5'-phosphate. At lysine 197 the chain carries N6-(pyridoxal phosphate)lysine. Position 238–239 (238–239 (NT)) interacts with pyridoxal 5'-phosphate.

Belongs to the class-V pyridoxal-phosphate-dependent aminotransferase family. SerC subfamily. As to quaternary structure, homodimer. Pyridoxal 5'-phosphate serves as cofactor.

The protein localises to the cytoplasm. It catalyses the reaction O-phospho-L-serine + 2-oxoglutarate = 3-phosphooxypyruvate + L-glutamate. It carries out the reaction 4-(phosphooxy)-L-threonine + 2-oxoglutarate = (R)-3-hydroxy-2-oxo-4-phosphooxybutanoate + L-glutamate. It functions in the pathway amino-acid biosynthesis; L-serine biosynthesis; L-serine from 3-phospho-D-glycerate: step 2/3. It participates in cofactor biosynthesis; pyridoxine 5'-phosphate biosynthesis; pyridoxine 5'-phosphate from D-erythrose 4-phosphate: step 3/5. Catalyzes the reversible conversion of 3-phosphohydroxypyruvate to phosphoserine and of 3-hydroxy-2-oxo-4-phosphonooxybutanoate to phosphohydroxythreonine. This Sodalis glossinidius (strain morsitans) protein is Phosphoserine aminotransferase.